The sequence spans 180 residues: Putative peroxiredoxin YkuU (180 aa).

In terms of domain architecture, Thioredoxin spans 4–165 (RMVGKQAPRF…TLRVLQALQT (162 aa)). Cys-52 (cysteine sulfenic acid (-SOH) intermediate) is an active-site residue.

This sequence belongs to the peroxiredoxin family. AhpC/Prx1 subfamily. As to quaternary structure, homodimer; disulfide-linked, upon oxidation.

It localises to the cytoplasm. The catalysed reaction is a hydroperoxide + [protein]-dithiol = [protein]-disulfide + an alcohol + H2O. Functionally, thiol-specific peroxidase that catalyzes the reduction of hydrogen peroxide and organic hydroperoxides to water and alcohols, respectively. Plays a role in cell protection against oxidative stress by detoxifying peroxides. The polypeptide is Putative peroxiredoxin YkuU (ykuU) (Bacillus subtilis (strain 168)).